A 474-amino-acid chain; its full sequence is CUGBP Elav-like family member 4 (474 aa).

Residues 1-287 (MYIKMATLAN…AAFAAAQMQQ (287 aa)) are sufficient for RNA-binding and MSE-dependent splicing activity. Over residues 18 to 28 (LSTNGLGSSPG) the composition is skewed to polar residues. Residues 18 to 41 (LSTNGLGSSPGSAGHMNGLSHSPG) are disordered. RRM domains are found at residues 54 to 135 (IKLF…PADS) and 141 to 221 (RKLF…FADT). Residues 228-247 (RRMQQMAGQMGMFNPMAIPF) form a necessary for TNNT2 exon 5 inclusion region. The RRM 3 domain maps to 392-467 (PQPPPMIPQQ…KRLKVQLKRP (76 aa)).

This sequence belongs to the CELF/BRUNOL family.

The protein resides in the nucleus. The protein localises to the cytoplasm. RNA-binding protein implicated in the regulation of pre-mRNA alternative splicing. Mediates exon inclusion and/or exclusion in pre-mRNA that are subject to tissue-specific and developmentally regulated alternative splicing. Specifically activates exon 5 inclusion of cardiac isoforms of TNNT2 during heart remodeling at the juvenile to adult transition. Promotes exclusion of both the smooth muscle (SM) and non-muscle (NM) exons in actinin pre-mRNAs. Activates the splicing of MAPT/Tau exon 10. Binds to muscle-specific splicing enhancer (MSE) intronic sites flanking the alternative exon 5 of TNNT2 pre-mRNA. In Macaca fascicularis (Crab-eating macaque), this protein is CUGBP Elav-like family member 4 (CELF4).